The chain runs to 143 residues: MTKAIPKIGSRKKVRIGLRRNARFSLRKSARRITKGIIHVQASFNNTIITVTDPQGRVVFWSSAGTCGFKSSRKASPYAGQRTAVDAIRTVGLQRAEVMVKGAGSGRDAALRAIAKSGVRLSCIRDVTPMPHNGCRPPKKRRL.

It belongs to the universal ribosomal protein uS11 family. As to quaternary structure, part of the 30S ribosomal subunit.

The protein localises to the plastid. It localises to the chloroplast. The chain is Small ribosomal subunit protein uS11c from Zea mays (Maize).